A 287-amino-acid chain; its full sequence is Ribonuclease Z (287 aa).

Residues His64, His66, Asp68, His69, His124, Asp191, and His250 each coordinate Zn(2+). The Proton acceptor role is filled by Asp68.

It belongs to the RNase Z family. In terms of assembly, homodimer. Requires Zn(2+) as cofactor.

The enzyme catalyses Endonucleolytic cleavage of RNA, removing extra 3' nucleotides from tRNA precursor, generating 3' termini of tRNAs. A 3'-hydroxy group is left at the tRNA terminus and a 5'-phosphoryl group is left at the trailer molecule.. Zinc phosphodiesterase, which displays some tRNA 3'-processing endonuclease activity. Probably involved in tRNA maturation, by removing a 3'-trailer from precursor tRNA. This Pyrobaculum arsenaticum (strain DSM 13514 / JCM 11321 / PZ6) protein is Ribonuclease Z.